An 824-amino-acid chain; its full sequence is Acyl-homoserine lactone acylase QuiP (824 aa).

The first 26 residues, 1 to 26, serve as a signal peptide directing secretion; it reads MASPALRHFLPRFGAAAAAASFLSLA. Ser-264 (nucleophile) is an active-site residue.

The protein belongs to the peptidase S45 family. As to quaternary structure, heterodimer of an alpha subunit and a beta subunit processed from the same precursor.

It is found in the periplasm. The enzyme catalyses an N-acyl-L-homoserine lactone + H2O = L-homoserine lactone + a carboxylate. Functionally, catalyzes the deacylation of acyl-homoserine lactone (AHL or acyl-HSL), releasing homoserine lactone (HSL) and the corresponding fatty acid. Possesses a specificity for the degradation of long-chain acyl-HSLs (side chains of seven or more carbons in length). The polypeptide is Acyl-homoserine lactone acylase QuiP (quiP) (Pseudomonas syringae pv. tomato (strain ATCC BAA-871 / DC3000)).